We begin with the raw amino-acid sequence, 410 residues long: MTTLLPALDLAQLDALDARDPLAHKRAEFDLPGDIIYLDGNSLGALPRRVPARLSQVATEEWGHHLIRSWTRNAEAAQDWMALPDRVAAKLAPLLGAGAHEVAVGDSTSVNTFKALAAALRLSGRRVILSDADNFPTDLYVAQGLARLLGDVEVRTAPGDEMTQHFTDDVGVVLLTEVDYRTGRRLDMRAITAAAHARGIVTVWDLAHSAGAFAVDLGGAGADFAIGCGYKFLNGGPGAPAFLYVAERHLDRAEVVLSGWMGHADPFEMARAYAPAPGARRFVVGTPQVLSLSALDAALDVFGDVDLGALREKSLSLTDTFIRLMEPLAEQYPLELVTPLAHAERGSQVSYRHPHAQQVMAQLIECGIVGDFRTPDILRFGFTPLYLSHGDVGRAVAGIAAVLDELEGPA.

Residues T108, S109, 135–138, T176, D205, H208, and Y230 each bind pyridoxal 5'-phosphate; that span reads FPTD. K231 bears the N6-(pyridoxal phosphate)lysine mark. The pyridoxal 5'-phosphate site is built by W260 and T286.

It belongs to the kynureninase family. In terms of assembly, homodimer. Requires pyridoxal 5'-phosphate as cofactor.

The enzyme catalyses L-kynurenine + H2O = anthranilate + L-alanine + H(+). The catalysed reaction is 3-hydroxy-L-kynurenine + H2O = 3-hydroxyanthranilate + L-alanine + H(+). The protein operates within amino-acid degradation; L-kynurenine degradation; L-alanine and anthranilate from L-kynurenine: step 1/1. It participates in cofactor biosynthesis; NAD(+) biosynthesis; quinolinate from L-kynurenine: step 2/3. Its function is as follows. Catalyzes the cleavage of L-kynurenine (L-Kyn) and L-3-hydroxykynurenine (L-3OHKyn) into anthranilic acid (AA) and 3-hydroxyanthranilic acid (3-OHAA), respectively. This Deinococcus radiodurans (strain ATCC 13939 / DSM 20539 / JCM 16871 / CCUG 27074 / LMG 4051 / NBRC 15346 / NCIMB 9279 / VKM B-1422 / R1) protein is Kynureninase.